The following is a 1403-amino-acid chain: Sushi, nidogen and EGF-like domain-containing protein 1 (1403 aa).

A signal peptide spans 1-24 (MRRGAAWALLLAAALGLGARGVRA). In terms of domain architecture, NIDO spans 103 to 258 (AFWADVDNRR…GRWAFRIDDA (156 aa)). 3 consecutive EGF-like domains span residues 268–309 (TTSV…RRCH), 311–347 (DVNE…PTCE), and 349–385 (AQSP…ATCE). 18 disulfides stabilise this stretch: Cys272-Cys284, Cys278-Cys297, Cys299-Cys308, Cys315-Cys326, Cys320-Cys335, Cys337-Cys346, Cys353-Cys364, Cys358-Cys373, Cys375-Cys384, Cys391-Cys402, Cys396-Cys411, Cys413-Cys422, Cys433-Cys444, Cys438-Cys453, Cys455-Cys464, Cys472-Cys480, Cys474-Cys488, and Cys490-Cys499. Residue Asn292 is glycosylated (N-linked (GlcNAc...) asparagine). In terms of domain architecture, EGF-like 4; calcium-binding spans 387-423 (DVDECSSDPCLNGGSCVDLVGNYSCICVEPFEGPQCE). The N-linked (GlcNAc...) asparagine glycan is linked to Asn408. EGF-like domains lie at 429-465 (VPSP…LDCR) and 468-500 (ILND…LLCE). The N-linked (GlcNAc...) asparagine glycan is linked to Asn484. Asn536 is a glycosylation site (N-linked (GlcNAc...) asparagine). EGF-like domains are found at residues 541–577 (LPSP…RHCE), 580–616 (RPHL…RHCE), 619–655 (KPDS…RHCE), and 657–693 (APSP…HRCQ). 26 disulfides stabilise this stretch: Cys545/Cys556, Cys550/Cys565, Cys567/Cys576, Cys584/Cys595, Cys589/Cys604, Cys606/Cys615, Cys623/Cys634, Cys628/Cys643, Cys645/Cys654, Cys661/Cys672, Cys666/Cys681, Cys683/Cys692, Cys698/Cys739, Cys724/Cys751, Cys757/Cys768, Cys762/Cys777, Cys779/Cys788, Cys795/Cys806, Cys800/Cys815, Cys817/Cys826, Cys833/Cys844, Cys838/Cys853, Cys855/Cys864, Cys871/Cys882, Cys876/Cys891, and Cys893/Cys902. Positions 696 to 753 (VDCGQPEEVKHATMRLNGTRMGSVALYTCDPGFSLSVLSHMRVCQPQGVWSQPPQCIE) constitute a Sushi domain. An N-linked (GlcNAc...) asparagine glycan is attached at Asn712. The EGF-like 11; calcium-binding domain maps to 753–789 (EVDECQSQPCLHKGSCQDLIAGYQCLCSPGYEGVHCE). One can recognise an EGF-like 12; calcium-binding domain in the interval 791–827 (ETDECQAQPCRNGGSCRDLPGAFICQCPEGFVGTHCE). 2 EGF-like domains span residues 829–865 (EVDA…YNCE) and 867–903 (VSDP…KDCT). Residue Asn886 is glycosylated (N-linked (GlcNAc...) asparagine). Fibronectin type-III domains follow at residues 908–1006 (PPTA…TRPR), 1007–1105 (PIED…TRPL), and 1106–1200 (PPAN…SPRD). N-linked (GlcNAc...) asparagine glycans are attached at residues Asn977, Asn1015, Asn1109, Asn1139, and Asn1298. Positions 1295–1314 (LPKNNSKDTESTPGSCSEDT) are disordered. A compositionally biased stretch (polar residues) spans 1305–1314 (STPGSCSEDT). Residues 1306–1342 (TPGSCSEDTCQNGGTCVPGANAHSCDCRPGFKGRHCE) form the EGF-like 15 domain. Cystine bridges form between Cys1310–Cys1321, Cys1315–Cys1330, and Cys1332–Cys1341.

In terms of processing, phosphorylated on serine and threonine residues. N-glycosylated. Expressed in liver.

Its subcellular location is the secreted. The protein localises to the extracellular space. The protein resides in the extracellular matrix. The sequence is that of Sushi, nidogen and EGF-like domain-containing protein 1 from Rattus norvegicus (Rat).